A 211-amino-acid polypeptide reads, in one-letter code: MVKLSCGPILLALVLCISLTSVANAQQCGRQRGGALCGNNLCCSQFGWCGSTPEYCSPSQGCQSQCTGSGPDPGQGGSAQNVRATYHIYNPQNVGWDLNAVSAYCSTWDANKPYAWRSKYGWTAFCGPVGPRGRDSCGKCLRVTNTRTGAQTTVRIVDQCSNGGLDLDINVFQQIDTDGVGNQQGHLIVNYQFVNCGDNVNVPLLSVVDKE.

The N-terminal stretch at 1–25 (MVKLSCGPILLALVLCISLTSVANA) is a signal peptide. Positions 26-68 (QQCGRQRGGALCGNNLCCSQFGWCGSTPEYCSPSQGCQSQCTG) constitute a Chitin-binding type-1 domain. Intrachain disulfides connect Cys-28–Cys-43, Cys-37–Cys-49, Cys-42–Cys-56, and Cys-62–Cys-66. Residues 77–198 (GSAQNVRATY…VNYQFVNCGD (122 aa)) form the Barwin domain.

This Solanum tuberosum (Potato) protein is Wound-induced protein WIN2 (WIN2).